Consider the following 360-residue polypeptide: Peptide chain release factor 1 (360 aa).

Glutamine 235 bears the N5-methylglutamine mark.

Belongs to the prokaryotic/mitochondrial release factor family. In terms of processing, methylated by PrmC. Methylation increases the termination efficiency of RF1.

The protein localises to the cytoplasm. Functionally, peptide chain release factor 1 directs the termination of translation in response to the peptide chain termination codons UAG and UAA. The chain is Peptide chain release factor 1 from Bordetella parapertussis (strain 12822 / ATCC BAA-587 / NCTC 13253).